The primary structure comprises 257 residues: Pimeloyl-[acyl-carrier protein] methyl ester esterase (257 aa).

Residues 16–240 (LVLIHGWGMN…EQASHAPFIS (225 aa)) form the AB hydrolase-1 domain. Substrate contacts are provided by residues Trp22, 82–83 (SL), and 143–147 (FMALQ). Ser82 serves as the catalytic Nucleophile. Catalysis depends on residues Asp207 and His235. His235 provides a ligand contact to substrate.

Belongs to the AB hydrolase superfamily. Carboxylesterase BioH family. Monomer.

It is found in the cytoplasm. It catalyses the reaction 6-carboxyhexanoyl-[ACP] methyl ester + H2O = 6-carboxyhexanoyl-[ACP] + methanol + H(+). It participates in cofactor biosynthesis; biotin biosynthesis. The physiological role of BioH is to remove the methyl group introduced by BioC when the pimeloyl moiety is complete. It allows to synthesize pimeloyl-ACP via the fatty acid synthetic pathway through the hydrolysis of the ester bonds of pimeloyl-ACP esters. This is Pimeloyl-[acyl-carrier protein] methyl ester esterase from Aliivibrio fischeri (strain MJ11) (Vibrio fischeri).